Here is a 175-residue protein sequence, read N- to C-terminus: Peptide methionine sulfoxide reductase MsrA (175 aa).

Residue cysteine 10 is part of the active site.

Belongs to the MsrA Met sulfoxide reductase family.

It carries out the reaction L-methionyl-[protein] + [thioredoxin]-disulfide + H2O = L-methionyl-(S)-S-oxide-[protein] + [thioredoxin]-dithiol. The catalysed reaction is [thioredoxin]-disulfide + L-methionine + H2O = L-methionine (S)-S-oxide + [thioredoxin]-dithiol. Has an important function as a repair enzyme for proteins that have been inactivated by oxidation. Catalyzes the reversible oxidation-reduction of methionine sulfoxide in proteins to methionine. The sequence is that of Peptide methionine sulfoxide reductase MsrA from Clavibacter michiganensis subsp. michiganensis (strain NCPPB 382).